A 245-amino-acid chain; its full sequence is uncharacterized protein (245 aa).

This is an uncharacterized protein from Escherichia coli.